We begin with the raw amino-acid sequence, 302 residues long: Protoheme IX farnesyltransferase (302 aa).

9 consecutive transmembrane segments (helical) span residues 26-46, 48-68, 98-118, 120-140, 148-168, 174-194, 221-241, 244-264, and 280-300; these read VVVL…PGQV, WVAL…AAAL, VLGF…LWIN, LTAA…TLYL, IVIG…AVTG, ALLL…ALAV, ILLY…TFMG, LYLA…VRLL, and IIYL…PVWL.

The protein belongs to the UbiA prenyltransferase family. Protoheme IX farnesyltransferase subfamily.

The protein localises to the cell inner membrane. It catalyses the reaction heme b + (2E,6E)-farnesyl diphosphate + H2O = Fe(II)-heme o + diphosphate. It functions in the pathway porphyrin-containing compound metabolism; heme O biosynthesis; heme O from protoheme: step 1/1. Functionally, converts heme B (protoheme IX) to heme O by substitution of the vinyl group on carbon 2 of heme B porphyrin ring with a hydroxyethyl farnesyl side group. This Alkalilimnicola ehrlichii (strain ATCC BAA-1101 / DSM 17681 / MLHE-1) protein is Protoheme IX farnesyltransferase.